Here is an 864-residue protein sequence, read N- to C-terminus: 3-O-alpha-D-mannopyranosyl-alpha-D-mannopyranose xylosylphosphotransferase (864 aa).

Residues 1-66 are disordered; the sequence is MPSTALSPPS…VPPRSPSRKI (66 aa). The Cytoplasmic portion of the chain corresponds to 1 to 82; the sequence is MPSTALSPPS…HIRPHITPRT (82 aa). 2 stretches are compositionally biased toward low complexity: residues 16-29 and 42-52; these read SYDS…PSSP and SPSPSRLESLL. Residues 83–103 traverse the membrane as a helical segment; sequence LTPVFLWTLALWLIHHFLFPL. At 104 to 864 the chain is on the lumenal side; that stretch reads SSPFAKLAKP…WDPVKDRYND (761 aa). N-linked (GlcNAc...) asparagine glycosylation is found at N200, N301, and N583.

This sequence belongs to the XPT1 family. It depends on Mn(2+) as a cofactor.

The protein resides in the golgi apparatus membrane. It catalyses the reaction 3-alpha-D-mannopyranosyl-alpha-D-mannopyranose + UDP-alpha-D-xylose = 3-O-(6-O-alpha-D-xylosylphospho-alpha-D-mannopyranosyl)-alpha-D-mannopyranose + UMP + H(+). In terms of biological role, xylosylphosphotransferase that is specific for UDP-xylose as a donor and mannose as an acceptor to form a xylose-alpha-1-phosphate-6-mannose linkage. Functions in the O-glycosylation of proteins en route through the secretory pathway. The polypeptide is 3-O-alpha-D-mannopyranosyl-alpha-D-mannopyranose xylosylphosphotransferase (XPT1) (Cryptococcus neoformans var. grubii (Filobasidiella neoformans var. grubii)).